The chain runs to 315 residues: Nucleotide-binding protein PsycPRwf_2129 (315 aa).

Residue 29–36 participates in ATP binding; it reads GRSGSGKT. 79–82 is a GTP binding site; it reads DIRT.

Belongs to the RapZ-like family.

Functionally, displays ATPase and GTPase activities. The sequence is that of Nucleotide-binding protein PsycPRwf_2129 from Psychrobacter sp. (strain PRwf-1).